A 303-amino-acid chain; its full sequence is Growth/differentiation factor 15 (303 aa).

The N-terminal stretch at 1 to 30 is a signal peptide; that stretch reads MAPPALQAQPPGGSQLRFLLFLLLLLLLLS. The propeptide occupies 31–188; it reads WPSQGDALAM…LRVAAGRGRR (158 aa). N-linked (GlcNAc...) asparagine glycosylation occurs at Asn71. Intrachain disulfides connect Cys198–Cys205, Cys206–Cys269, Cys235–Cys300, and Cys239–Cys302.

It belongs to the TGF-beta family. In terms of assembly, homodimer; disulfide-linked. Interacts with GFRAL and RET; ligand of GFRAL, which mediates GDF15 internalization and cellular signaling through interaction with RET via the formation of a 2:2:2 ternary complex composed of GDF15, GFRAL and RET. As to expression, detected in plasma (at protein level). Highly expressed in liver. Expressed in the distal small intestine, colon and kidney. Expressed in skeletal muscle in response to mitochondrial stress. Expressed by cardiomyocytes, expression is highly increased in heart diseases. Also detected in subcutaneous fat.

It is found in the secreted. In terms of biological role, hormone produced in response to various stresses to confer information about those stresses to the brain, and trigger an aversive response, characterized by nausea and/or loss of appetite. The aversive response is both required to reduce continuing exposure to those stresses at the time of exposure and to promote avoidance behavior in the future. Acts by binding to its receptor, GFRAL, activating GFRAL-expressing neurons localized in the area postrema and nucleus tractus solitarius of the brainstem. It then triggers the activation of neurons localized within the parabrachial nucleus and central amygdala, which constitutes part of the 'emergency circuit' that shapes responses to stressful conditions. The GDF15-GFRAL signal induces expression of genes involved in metabolism, such as lipid metabolism in adipose tissues. Required for avoidance behavior in response to food allergens: induced downstream of mast cell activation to promote aversion and minimize harmful effects of exposure to noxious substances. In addition to suppress appetite, also promotes weight loss by enhancing energy expenditure in muscle: acts by increasing calcium futile cycling in muscle. Contributes to the effect of metformin, an anti-diabetic drug, on appetite reduction and weight loss: produced in the kidney in response to metformin treatment, thereby activating the GDF15-GFRAL response, leading to reduced appetite and weight. Produced in response to anticancer drugs, such as camptothecin or cisplatin, promoting nausea and contributing to malnutrition. Overproduced in many cancers, promoting anorexia in cancer (cachexia). Responsible for the risk of nausea during pregnancy: high levels of GDF15 during pregnancy, mostly originating from embryos, are associated with increased nausea. Maternal sensitivity to nausea is probably determined by pre-pregnancy exposure to GDF15, females with naturally high level of GDF15 being less susceptible to nausea than female mice with low levels of GDF15 before pregnancy. Promotes metabolic adaptation in response to systemic inflammation caused by bacterial and viral infections in order to promote tissue tolerance and prevent tissue damage. Required for tissue tolerance in response to myocardial infarction by acting as an inhibitor of leukocyte integring activation, thereby protecting against cardiac rupture. Inhibits growth hormone signaling on hepatocytes. This chain is Growth/differentiation factor 15, found in Mus musculus (Mouse).